Consider the following 93-residue polypeptide: Small ribosomal subunit protein uS17 (93 aa).

It belongs to the universal ribosomal protein uS17 family. In terms of assembly, part of the 30S ribosomal subunit.

Functionally, one of the primary rRNA binding proteins, it binds specifically to the 5'-end of 16S ribosomal RNA. This Bordetella bronchiseptica (strain ATCC BAA-588 / NCTC 13252 / RB50) (Alcaligenes bronchisepticus) protein is Small ribosomal subunit protein uS17.